Reading from the N-terminus, the 138-residue chain is MRILGLDLGTKTLGVAISDEMGWTAQGIETIKIDEAGGDFGLSRLSEIVSQYGTDKIVLGFPKNMNGTVGPRGEASQSFAKVLENTYNVPVVLWDERLSTMAAEKMLISADVSRQKRKKVIDKMAAVMILQGYLDSLN.

This sequence belongs to the YqgF nuclease family.

Its subcellular location is the cytoplasm. Could be a nuclease involved in processing of the 5'-end of pre-16S rRNA. The protein is Putative pre-16S rRNA nuclease of Bacillus pumilus (strain SAFR-032).